Consider the following 113-residue polypeptide: UPF0342 protein SPy_0811/M5005_Spy0626 (113 aa).

It belongs to the UPF0342 family.

The polypeptide is UPF0342 protein SPy_0811/M5005_Spy0626 (Streptococcus pyogenes serotype M1).